Consider the following 256-residue polypeptide: Thiazole synthase (256 aa).

The active-site Schiff-base intermediate with DXP is the lysine 96. 1-deoxy-D-xylulose 5-phosphate-binding positions include glycine 157, 184–185 (AG), and 206–207 (NT).

It belongs to the ThiG family. As to quaternary structure, homotetramer. Forms heterodimers with either ThiH or ThiS.

It is found in the cytoplasm. The enzyme catalyses [ThiS sulfur-carrier protein]-C-terminal-Gly-aminoethanethioate + 2-iminoacetate + 1-deoxy-D-xylulose 5-phosphate = [ThiS sulfur-carrier protein]-C-terminal Gly-Gly + 2-[(2R,5Z)-2-carboxy-4-methylthiazol-5(2H)-ylidene]ethyl phosphate + 2 H2O + H(+). It functions in the pathway cofactor biosynthesis; thiamine diphosphate biosynthesis. Functionally, catalyzes the rearrangement of 1-deoxy-D-xylulose 5-phosphate (DXP) to produce the thiazole phosphate moiety of thiamine. Sulfur is provided by the thiocarboxylate moiety of the carrier protein ThiS. In vitro, sulfur can be provided by H(2)S. This is Thiazole synthase from Brucella abortus (strain S19).